A 539-amino-acid chain; its full sequence is MATGSTELLIGWCIFGVLLLAILAFCWVYVRKYQSHQESEVISTITAISSLAIALITSALLPVDIFLVSFMKNHNGTFKDWAESNTTRLQIENTVLIGYYTLYSIILFCVFLWIPFVYFYYEEKDDTDGSQCSQIANAFKYTSGFILVCSCLLLIGAFAPLDIHTNKNSTDLDKIKLLFLELGSSNGLAALSFSISSLTLIGMLAAITYTAYGMSALPLNLIKGTRNAHYERLENSEDIEEVEQQVERIMSKCKDGRPLSSKDRQALYKLKEKLRTLKRRDRHLEYHENNCWTKCCIVIRPFKIIWGILFILVALLFIVSLFLSNLDKALHSAGIDSGFIIFGTNLTNPLNMLLPVLQTVFPLDYIFITIITMYFIFTSMAGIRNMGIWFFWIRLYKIRRRRTRPQALLFLCMILLLIVLHTSYMIYSLAPQYVMYGSQKYLWENNSTQETAIGNSSASVLKDCDASAPEDQCTVTRTYLFLHKFWFFSSIYYFGNWAFIVVFVIGLIVSCCKGKKSVIEGEVEDDDSDLSDDEEHPYA.

The Extracellular segment spans residues 1–7; it reads MATGSTE. A helical membrane pass occupies residues 8–28; the sequence is LLIGWCIFGVLLLAILAFCWV. At 29-47 the chain is on the cytoplasmic side; it reads YVRKYQSHQESEVISTITA. Residues 48–68 traverse the membrane as a helical segment; it reads ISSLAIALITSALLPVDIFLV. Residues 69–98 are Extracellular-facing; it reads SFMKNHNGTFKDWAESNTTRLQIENTVLIG. 2 N-linked (GlcNAc...) asparagine glycosylation sites follow: N75 and N85. A helical membrane pass occupies residues 99–119; it reads YYTLYSIILFCVFLWIPFVYF. At 120-142 the chain is on the cytoplasmic side; sequence YYEEKDDTDGSQCSQIANAFKYT. A helical membrane pass occupies residues 143 to 163; it reads SGFILVCSCLLLIGAFAPLDI. The Extracellular portion of the chain corresponds to 164–186; that stretch reads HTNKNSTDLDKIKLLFLELGSSN. N168 carries an N-linked (GlcNAc...) asparagine glycan. Residues 187-207 form a helical membrane-spanning segment; the sequence is GLAALSFSISSLTLIGMLAAI. The Cytoplasmic segment spans residues 208–303; sequence TYTAYGMSAL…KCCIVIRPFK (96 aa). A helical membrane pass occupies residues 304 to 324; it reads IIWGILFILVALLFIVSLFLS. The Extracellular segment spans residues 325–362; the sequence is NLDKALHSAGIDSGFIIFGTNLTNPLNMLLPVLQTVFP. N345 carries N-linked (GlcNAc...) asparagine glycosylation. Residues 363-383 form a helical membrane-spanning segment; sequence LDYIFITIITMYFIFTSMAGI. Residues 384 to 406 are Cytoplasmic-facing; it reads RNMGIWFFWIRLYKIRRRRTRPQ. A helical transmembrane segment spans residues 407-427; that stretch reads ALLFLCMILLLIVLHTSYMIY. Over 428-484 the chain is Extracellular; the sequence is SLAPQYVMYGSQKYLWENNSTQETAIGNSSASVLKDCDASAPEDQCTVTRTYLFLHK. N-linked (GlcNAc...) asparagine glycosylation is found at N445, N446, and N455. The helical transmembrane segment at 485-505 threads the bilayer; it reads FWFFSSIYYFGNWAFIVVFVI. At 506-539 the chain is on the cytoplasmic side; the sequence is GLIVSCCKGKKSVIEGEVEDDDSDLSDDEEHPYA.

Belongs to the LIMR family. LMBRD1 subfamily.

Its subcellular location is the endoplasmic reticulum membrane. It is found in the lysosome membrane. The protein resides in the cell membrane. Its function is as follows. Lysosomal membrane chaperone required to export cobalamin (vitamin B12) from the lysosome to the cytosol, allowing its conversion to cofactors. Targets ABCD4 transporter from the endoplasmic reticulum to the lysosome. Then forms a complex with lysosomal ABCD4 and cytoplasmic MMACHC to transport cobalamin across the lysosomal membrane. May play a role in mediating and regulating the internalization of the insulin receptor. In Xenopus tropicalis (Western clawed frog), this protein is Lysosomal cobalamin transport escort protein LMBD1 (lmbrd1).